The chain runs to 305 residues: Aquaporin-1 (305 aa).

The disordered stretch occupies residues 1–34; the sequence is MSSNDSNDTDKQHTRLDPTGVDDAYIPPEQPETK. The Cytoplasmic segment spans residues 1–48; it reads MSSNDSNDTDKQHTRLDPTGVDDAYIPPEQPETKHHRFKISKDTLRNH. Residues 49–69 form a helical membrane-spanning segment; sequence FIAAAGEFCGTFMFLWCAYVI. The Extracellular segment spans residues 70–91; the sequence is CNVANHDVALVAAPDGSHPGQL. A helical membrane pass occupies residues 92–112; the sequence is IMIAIGFGFSVMFSIWCFAGV. Over 113–136 the chain is Cytoplasmic; that stretch reads SGGALNPAMSLSLCLARAVSPTRC. The NPA 1 motif lies at 118-120; it reads NPA. Residues 137–157 form a helical membrane-spanning segment; it reads VVMWVSQIVAGMAAGGAASAM. The Extracellular portion of the chain corresponds to 158 to 176; that stretch reads TPGEVLFANSLGLGCSRTR. A helical transmembrane segment spans residues 177–197; sequence GLFLEMFGTAILCLTVLMTAV. The Cytoplasmic portion of the chain corresponds to 198–203; that stretch reads EKRETN. Residues 204-224 traverse the membrane as a helical segment; it reads FMAALPIGISLFIAHVALTAY. At 225–248 the chain is on the extracellular side; the sequence is TGTGVNPARSLGAAVAARYFPHYH. Residues 230–232 carry the NPA 2 motif; it reads NPA. A helical transmembrane segment spans residues 249 to 269; that stretch reads WIYWIGTLLGSILAWSVWQLL. At 270–305 the chain is on the cytoplasmic side; that stretch reads QILDYTTYVTAEKAASTKEKAQKKGETSSSSAVAEV. Over residues 286 to 295 the composition is skewed to basic and acidic residues; sequence TKEKAQKKGE. Positions 286 to 305 are disordered; it reads TKEKAQKKGETSSSSAVAEV. Residues 296–305 show a composition bias toward polar residues; sequence TSSSSAVAEV.

Belongs to the MIP/aquaporin (TC 1.A.8) family.

It localises to the endoplasmic reticulum membrane. The protein resides in the cell membrane. Functionally, water channel required to facilitate the transport of water across membranes. Involved in sporulation, freeze tolerance and osmotolerance. Is non-functional in most laboratory strains. In Saccharomyces cerevisiae (strain YJM789) (Baker's yeast), this protein is Aquaporin-1 (AQY1).